The sequence spans 240 residues: Putative protein FAM10A4 (240 aa).

The disordered stretch occupies residues 38–94; it reads MGGTATQKAKSEENTKEEKPDSKVEEDLKADEPSSEESDLEIDKEGVIEPDTDAPQE. Residues 46-69 show a composition bias toward basic and acidic residues; that stretch reads AKSEENTKEEKPDSKVEEDLKADE. The span at 85–94 shows a compositional bias: acidic residues; sequence IEPDTDAPQE. TPR repeat units lie at residues 110–143, 145–177, and 179–211; these read ANDK…NPRL, ILYA…NPDS, and QPYK…DYDE. Positions 220–240 are disordered; that stretch reads VQPRAQKIAEHQRKYERKREE. Residues 226–240 show a composition bias toward basic and acidic residues; sequence KIAEHQRKYERKREE.

This sequence belongs to the FAM10 family. Highly expressed in bone marrow and weakly in placenta, pancreas, heart and HeLa cell line.

It localises to the cytoplasm. This chain is Putative protein FAM10A4 (ST13P4), found in Homo sapiens (Human).